The chain runs to 156 residues: Small ribosomal subunit protein uS7 (156 aa).

The protein belongs to the universal ribosomal protein uS7 family. In terms of assembly, part of the 30S ribosomal subunit. Contacts proteins S9 and S11.

One of the primary rRNA binding proteins, it binds directly to 16S rRNA where it nucleates assembly of the head domain of the 30S subunit. Is located at the subunit interface close to the decoding center, probably blocks exit of the E-site tRNA. This chain is Small ribosomal subunit protein uS7, found in Thermoanaerobacter sp. (strain X514).